Consider the following 353-residue polypeptide: Protein RecA (353 aa).

67-74 (GPESSGKT) is a binding site for ATP. Residues 330–353 (SNPNSTPDFSVDDSEGVAETNEDF) are disordered. A compositionally biased stretch (acidic residues) spans 339–353 (SVDDSEGVAETNEDF).

This sequence belongs to the RecA family.

The protein localises to the cytoplasm. Can catalyze the hydrolysis of ATP in the presence of single-stranded DNA, the ATP-dependent uptake of single-stranded DNA by duplex DNA, and the ATP-dependent hybridization of homologous single-stranded DNAs. It interacts with LexA causing its activation and leading to its autocatalytic cleavage. The polypeptide is Protein RecA (Shigella sonnei).